Reading from the N-terminus, the 867-residue chain is Probable alpha,alpha-trehalose-phosphate synthase [UDP-forming] 9 (867 aa).

Phosphoserine is present on S5. T32 is subject to Phosphothreonine. A glycosyltransferase region spans residues 59-546 (ERKIIVANML…AKSFMQDLER (488 aa)).

It in the N-terminal section; belongs to the glycosyltransferase 20 family. In the C-terminal section; belongs to the trehalose phosphatase family.

The enzyme catalyses D-glucose 6-phosphate + UDP-alpha-D-glucose = alpha,alpha-trehalose 6-phosphate + UDP + H(+). This chain is Probable alpha,alpha-trehalose-phosphate synthase [UDP-forming] 9 (TPS9), found in Arabidopsis thaliana (Mouse-ear cress).